A 129-amino-acid polypeptide reads, in one-letter code: Holo-[acyl-carrier-protein] synthase (129 aa).

2 residues coordinate Mg(2+): Asp-8 and Glu-58.

This sequence belongs to the P-Pant transferase superfamily. AcpS family. Mg(2+) serves as cofactor.

The protein localises to the cytoplasm. It carries out the reaction apo-[ACP] + CoA = holo-[ACP] + adenosine 3',5'-bisphosphate + H(+). In terms of biological role, transfers the 4'-phosphopantetheine moiety from coenzyme A to a Ser of acyl-carrier-protein. This Geobacillus kaustophilus (strain HTA426) protein is Holo-[acyl-carrier-protein] synthase.